The sequence spans 388 residues: MPQLSQDNQECLQKHFSRPSIWTQFLPLFRAQRYNTDIHQITENEGDLRAVPDIKSFPPAQLPDSPAAPKLFGLLSSPLSSLARFFSHLLRRPPPEAPRRRLDFSPLLPALPAARLSRGHEELPGRLSLLLGAALALPGRPSGGRPLRPPHPVAKPREEDATAGQSSPMPQMGSERMEMRKRQMPAAQDTPGAAPGQPGAGSRGSNACCFCWCCCCSCSCLTVRNQEDQRPTIASHELRADLPTWEESPAPTLEEVNAWAQSFDKLMVTPAGRNAFREFLRTEFSEENMLFWMACEELKKEANKNIIEEKARIIYEDYISILSPKEVSLDSRVREVINRNMVEPSQHIFDDAQLQIYTLMHRDSYPRFMNSAVYKDLLQSLSEKSIEA.

Residues 138-199 (PGRPSGGRPL…TPGAAPGQPG (62 aa)) are disordered. A compositionally biased stretch (low complexity) spans 185–197 (PAAQDTPGAAPGQ). An RGS domain is found at 262–378 (SFDKLMVTPA…MNSAVYKDLL (117 aa)).

Forms a complex with G(alpha)z/i2 subunits and mu-opioid receptors; the formation of this complex results in mu-opioid receptor desensitization. Interacts with OPRM1. Post-translationally, fatty acylated. Heavily palmitoylated in the cysteine string motif. N- and O-glycosylated in synapsomal membranes. In terms of processing, serine phosphorylated in synapsomal membranes. Post-translationally, sumoylated with SUMO1 and SUMO2 in synaptosomes. The sumoylated forms act as a scaffold for sequestering mu-opioid receptor-activated G(alpha) subunits. As to expression, isoform 5 is expressed in brain at high levels in the caudate nucleus and temporal lobe.

It localises to the membrane. It is found in the nucleus. The protein localises to the cytoplasm. Inhibits signal transduction by increasing the GTPase activity of G protein alpha subunits thereby driving them into their inactive GDP-bound form. Binds selectively to G(z)-alpha and G(alpha)-i2 subunits, accelerates their GTPase activity and regulates their signaling activities. The G(z)-alpha activity is inhibited by the phosphorylation and palmitoylation of the G-protein. Negatively regulates mu-opioid receptor-mediated activation of the G-proteins. The sequence is that of Regulator of G-protein signaling 20 (RGS20) from Homo sapiens (Human).